The following is a 288-amino-acid chain: Diaminopimelate epimerase (288 aa).

Positions 13, 46, and 66 each coordinate substrate. Residue cysteine 75 is the Proton donor of the active site. Substrate is bound by residues glycine 76 to asparagine 77, asparagine 166, asparagine 199, and glutamate 217 to arginine 218. Cysteine 226 (proton acceptor) is an active-site residue. Glycine 227–threonine 228 provides a ligand contact to substrate.

This sequence belongs to the diaminopimelate epimerase family. In terms of assembly, homodimer.

The protein resides in the cytoplasm. The catalysed reaction is (2S,6S)-2,6-diaminopimelate = meso-2,6-diaminopimelate. It functions in the pathway amino-acid biosynthesis; L-lysine biosynthesis via DAP pathway; DL-2,6-diaminopimelate from LL-2,6-diaminopimelate: step 1/1. Its function is as follows. Catalyzes the stereoinversion of LL-2,6-diaminopimelate (L,L-DAP) to meso-diaminopimelate (meso-DAP), a precursor of L-lysine and an essential component of the bacterial peptidoglycan. The chain is Diaminopimelate epimerase from Cupriavidus metallidurans (strain ATCC 43123 / DSM 2839 / NBRC 102507 / CH34) (Ralstonia metallidurans).